The chain runs to 72 residues: uncharacterized protein (72 aa).

This sequence belongs to the baculoviridae 8 kDa protein family.

This is an uncharacterized protein from Orgyia pseudotsugata (Douglas-fir tussock moth).